We begin with the raw amino-acid sequence, 408 residues long: MMMLDDYIAKSKLSESLTSTVWLAKHKLTGEEAVMKCFDLSKLNRNLRDCLNNELEFLSSVDHPNIIRLLHVSQDDDFLVMVLEYCDGGTLSSYIQRYGRVEEDIAKRFMKQIGAGLEIIHDNHIIHRDLKPENILIDGSGDDLVLKIADFSLARKLHPGKYLETVCGSPFYMAPEVLQFQRYNEKADMWSVGAILFELLHGYPPFRGNNNVQVLRNIKSSTALPFSRLILQQMHPDCIDVCSRLLSINPAATLGIEDFPFLGRIKNSRVWVKDTTFSSRQHGTRERKVATINGRLQFDLSQDAYLPQRLLENLMYIYNTIEMARVTGVPTSYLISRGESIKVLSQLLRKAKQKTWFFQMLRSWNLNKELMKVQLYVGGFISPTYSFTYSSITSNILINISNDIYSHC.

Positions 7–272 (YIAKSKLSES…GRIKNSRVWV (266 aa)) constitute a Protein kinase domain. Residues 13-21 (LSESLTSTV) and Lys-36 each bind ATP. Asp-129 functions as the Proton acceptor in the catalytic mechanism.

It belongs to the protein kinase superfamily. Ser/Thr protein kinase family.

It is found in the cytoplasmic vesicle. It localises to the autophagosome. In terms of biological role, serine/threonine protein kinase involved in autophagy. The ATG1-ATG13 protein kinase complex regulates downstream events required for autophagosome enclosure and/or vacuolar delivery. The protein is Serine/threonine-protein kinase ATG1t of Arabidopsis thaliana (Mouse-ear cress).